The sequence spans 438 residues: Cell division cycle-associated 7-like protein (438 aa).

Residues 9–33 (IPKEVADIFNAPSDDEEFVGFQDDV) carry the Integrase domain-binding motif 1 (IBM1) motif. Position 21 is a phosphoserine (Ser-21). The tract at residues 55–114 (ACLHSKYFTEELRRIFKEDTDSDNEDFEGFTESELNIGSNPELIESELSDGDKTHPMMSD) is PSIP1-binding. Positions 62–88 (FTEELRRIFKEDTDSDNEDFEGFTESE) match the Integrase domain-binding motif 2 (IBM2) motif. Residues 72–199 (EDTDSDNEDF…ESRAESQETS (128 aa)) are disordered. The residue at position 74 (Thr-74) is a Phosphothreonine. Positions 74-85 (TDSDNEDFEGFT) are enriched in acidic residues. Position 76 is a phosphoserine (Ser-76). A Phosphothreonine modification is found at Thr-85. Phosphoserine occurs at positions 100, 103, 113, 135, 136, 183, and 185. Positions 113 to 123 (SDEEDDDDEEE) are enriched in acidic residues. Over residues 166-183 (TDLRREKSCRQPKEKEDS) the composition is skewed to basic and acidic residues. The segment at 201–223 (ALLKRAMNIKENKAMLAQLLAEL) is MYC-binding. Residues Lys-210 and Lys-213 each participate in a glycyl lysine isopeptide (Lys-Gly) (interchain with G-Cter in SUMO2) cross-link. Ser-249 is subject to Phosphoserine.

In terms of assembly, interacts with MYC. Interacts (via IBM motifs) with PSIP1 (via IBD domain); phosphorylation increases its affinity for PSIP1. Post-translationally, phosphorylation increases its interaction with PSIP1.

The protein localises to the cytoplasm. It localises to the nucleus. Plays a role in transcriptional regulation as a repressor that inhibits monoamine oxidase A (MAOA) activity and gene expression by binding to the promoter. Plays an important oncogenic role in mediating the full transforming effect of MYC in medulloblastoma cells. Involved in apoptotic signaling pathways; May act downstream of P38-kinase and BCL-2, but upstream of CASP3/caspase-3 as well as CCND1/cyclin D1 and E2F1. In Rattus norvegicus (Rat), this protein is Cell division cycle-associated 7-like protein (Cdca7l).